A 115-amino-acid chain; its full sequence is MSFRNIHYFLLLIVIAVPLGKYLYVAFFEKGKIDRFFSPIEAVIYRLSGIRSLEEMTWKSYCTALLIVNAALLGISYGLLRIQHYLPLNGAKVENMEPTLTFNTVVSFMTNTNLQ.

Helical transmembrane passes span Tyr8–Phe28 and Ser60–Leu80.

Belongs to the KdpA family. In terms of assembly, the system is composed of three essential subunits: KdpA, KdpB and KdpC.

Its subcellular location is the cell membrane. Its function is as follows. Part of the high-affinity ATP-driven potassium transport (or Kdp) system, which catalyzes the hydrolysis of ATP coupled with the electrogenic transport of potassium into the cytoplasm. This subunit binds the extracellular potassium ions and delivers the ions to the membrane domain of KdpB through an intramembrane tunnel. This chain is Potassium-transporting ATPase potassium-binding subunit, found in Geobacillus stearothermophilus (Bacillus stearothermophilus).